The sequence spans 686 residues: MKIQDRSLLIFLVLGILKSDAFNTRVKRHAPIRFQRSTRQSVVHFEFLDQEYVVDLEPNHSTFHENFKVFTQDGPQIVPRDEYIGTVREPRAGRAVLTQLEENVYIGSLYFVDDTLHLEPSYPHQLSDDLGPVVGYFESDLDLNLDLSAMPVRNQVSFRRANPFLKHRRAIAIPSDRRKDVLNVKRNRCTLKLVADYSFYSIFGKNNTGIVTKFLVNMIARVNEIYTPINWDVGKEDDISGRGRFQNMGFSIKEIKVLDRPNASDSHYNSYSRIWEVERLLREFAFAEGSKDFCLVHLVTARTFREVATLGLAYVSYKKWDETAGGICSKQETFNGRVAYINVLLSTSFANSEQSTYPLITKEIDIVVSHEYGHAWGATHDPTIDSDDPDVEECSPNDQNGGKYLMSQYAQKGYDANNVLFSPCSRKLIRDVLIGKWESCFQEEMTSFCGNGIVEDGEECDNGVDTDNEFNCCDKFCRLAVGAKCSPLNHICCTPTCQFHNSTHVCLPGDSLLCKADAVCNGFSGECPSAPPVRDGQECLEGGECLNGVCLPFCEKMSIGKKSCICEDLELSCRLCCRDYNGTCAPVPGHVYLRDGVRCSKGSCRDRKCVNEVVDNVRNYFLITFQTTGGVLEFIKTHIVVIAIIFFTLIFVGIYKIVKYGENFTEKVTHKTAGGCRSVFVKADVN.

Residues 1–21 (MKIQDRSLLIFLVLGILKSDA) form the signal peptide. Residues 22–177 (FNTRVKRHAP…RRAIAIPSDR (156 aa)) constitute a propeptide that is removed on maturation. N-linked (GlcNAc...) asparagine glycans are attached at residues N59, N206, and N262. Over 178–637 (RKDVLNVKRN…TGGVLEFIKT (460 aa)) the chain is Extracellular. One can recognise a Peptidase M12B domain in the interval 187 to 445 (NRCTLKLVAD…KWESCFQEEM (259 aa)). Intrachain disulfides connect C328-C440 and C394-C424. A Zn(2+)-binding site is contributed by H370. E371 is an active-site residue. Residues H374 and H380 each coordinate Zn(2+). Residues 446-535 (TSFCGNGIVE…ECPSAPPVRD (90 aa)) enclose the Disintegrin domain. N-linked (GlcNAc...) asparagine glycosylation occurs at N501. A disulfide bridge links C506 with C527. N-linked (GlcNAc...) asparagine glycosylation occurs at N581. The chain crosses the membrane as a helical span at residues 638–658 (HIVVIAIIFFTLIFVGIYKIV). Residues 659–686 (KYGENFTEKVTHKTAGGCRSVFVKADVN) lie on the Cytoplasmic side of the membrane.

Zn(2+) serves as cofactor.

The protein resides in the cell membrane. Metalloprotease. Acts together with protease sup-17 to facilitate lin-12/Notch signaling during developmental cell fate decision, including anchor cell/ventral uterine precursor cell decision. By modulating glp-1/Notch signaling, plays a role in germline development. The sequence is that of Disintegrin and metalloproteinase domain-containing protein 17 homolog from Caenorhabditis elegans.